The sequence spans 497 residues: Guanosine-5'-triphosphate,3'-diphosphate pyrophosphatase (497 aa).

It belongs to the GppA/Ppx family. GppA subfamily.

It carries out the reaction guanosine 3'-diphosphate 5'-triphosphate + H2O = guanosine 3',5'-bis(diphosphate) + phosphate + H(+). Its pathway is purine metabolism; ppGpp biosynthesis; ppGpp from GTP: step 2/2. Functionally, catalyzes the conversion of pppGpp to ppGpp. Guanosine pentaphosphate (pppGpp) is a cytoplasmic signaling molecule which together with ppGpp controls the 'stringent response', an adaptive process that allows bacteria to respond to amino acid starvation, resulting in the coordinated regulation of numerous cellular activities. The sequence is that of Guanosine-5'-triphosphate,3'-diphosphate pyrophosphatase from Aliivibrio fischeri (strain MJ11) (Vibrio fischeri).